The following is a 265-amino-acid chain: uncharacterized protein (265 aa).

The signal sequence occupies residues 1–23 (MNYFRILYCSVLLFFSFFSCTSA). The NodB homology domain maps to 67–248 (KEIYLTFDNG…TLKQQGYTFK (182 aa)).

This sequence belongs to the polysaccharide deacetylase family.

This is an uncharacterized protein from Geobacillus stearothermophilus (Bacillus stearothermophilus).